The chain runs to 276 residues: Exosome complex component RRP43 (276 aa).

Ala2 carries the post-translational modification N-acetylalanine.

Belongs to the RNase PH family. Component of the RNA exosome core complex (Exo-9), composed of EXOSC1, EXOSC2, EXOSC3, EXOSC4, EXOSC5, EXOSC6, EXOSC7, EXOSC8 and EXOSC9; within the complex interacts with EXOSC5 and EXOSC6. The catalytically inactive RNA exosome core complex (Exo-9) associates with the catalytic subunit EXOSC10/RRP6. Exo-9 may associate with DIS3 to form the nucleolar exosome complex, or DIS3L to form the cytoplasmic exosome complex. Exo-9 is formed by a hexameric base ring consisting of the heterodimers EXOSC4-EXOSC9, EXOSC5-EXOSC8 and EXOSC6-EXOSC7, and a cap ring consisting of EXOSC1, EXOSC2 and EXOSC3. The RNA exosome complex associates with cofactors C1D/RRP47, MPHOSPH6/MPP6 and MTREX/MTR4.

Its subcellular location is the cytoplasm. The protein localises to the nucleus. It localises to the nucleolus. Non-catalytic component of the RNA exosome complex which has 3'-&gt;5' exoribonuclease activity and participates in a multitude of cellular RNA processing and degradation events. In the nucleus, the RNA exosome complex is involved in proper maturation of stable RNA species such as rRNA, snRNA and snoRNA, in the elimination of RNA processing by-products and non-coding 'pervasive' transcripts, such as antisense RNA species and promoter-upstream transcripts (PROMPTs), and of mRNAs with processing defects, thereby limiting or excluding their export to the cytoplasm. The RNA exosome may be involved in Ig class switch recombination (CSR) and/or Ig variable region somatic hypermutation (SHM) by targeting AICDA deamination activity to transcribed dsDNA substrates. In the cytoplasm, the RNA exosome complex is involved in general mRNA turnover and specifically degrades inherently unstable mRNAs containing AU-rich elements (AREs) within their 3' untranslated regions, and in RNA surveillance pathways, preventing translation of aberrant mRNAs. It seems to be involved in degradation of histone mRNA. The catalytic inactive RNA exosome core complex of 9 subunits (Exo-9) is proposed to play a pivotal role in the binding and presentation of RNA for ribonucleolysis, and to serve as a scaffold for the association with catalytic subunits and accessory proteins or complexes. EXOSC8 binds to ARE-containing RNAs. In Mus musculus (Mouse), this protein is Exosome complex component RRP43 (Exosc8).